Reading from the N-terminus, the 99-residue chain is Malonate decarboxylase acyl carrier protein (99 aa).

Ser25 carries the O-(phosphoribosyl dephospho-coenzyme A)serine modification.

The protein belongs to the MdcC family. In terms of processing, covalently binds the prosthetic group of malonate decarboxylase.

The protein resides in the cytoplasm. Subunit of malonate decarboxylase, it is an acyl carrier protein to which acetyl and malonyl thioester residues are bound via a 2'-(5''-phosphoribosyl)-3'-dephospho-CoA prosthetic group and turn over during the catalytic mechanism. The polypeptide is Malonate decarboxylase acyl carrier protein (Pseudomonas fluorescens (strain SBW25)).